We begin with the raw amino-acid sequence, 930 residues long: uncharacterized protein (930 aa).

Positions 1–20 (MPSFVLWTFHLCSQWFQGLT) are cleaved as a signal peptide. N-linked (GlcNAc...) asparagine glycans are attached at residues Asn-137, Asn-146, Asn-164, Asn-210, Asn-257, Asn-628, Asn-717, and Asn-799.

The protein resides in the secreted. This is an uncharacterized protein from Arthroderma benhamiae (strain ATCC MYA-4681 / CBS 112371) (Trichophyton mentagrophytes).